The sequence spans 245 residues: 3-deoxy-manno-octulosonate cytidylyltransferase (245 aa).

Belongs to the KdsB family.

It is found in the cytoplasm. It carries out the reaction 3-deoxy-alpha-D-manno-oct-2-ulosonate + CTP = CMP-3-deoxy-beta-D-manno-octulosonate + diphosphate. The protein operates within nucleotide-sugar biosynthesis; CMP-3-deoxy-D-manno-octulosonate biosynthesis; CMP-3-deoxy-D-manno-octulosonate from 3-deoxy-D-manno-octulosonate and CTP: step 1/1. It functions in the pathway bacterial outer membrane biogenesis; lipopolysaccharide biosynthesis. Its function is as follows. Activates KDO (a required 8-carbon sugar) for incorporation into bacterial lipopolysaccharide in Gram-negative bacteria. This chain is 3-deoxy-manno-octulosonate cytidylyltransferase, found in Acidobacterium capsulatum (strain ATCC 51196 / DSM 11244 / BCRC 80197 / JCM 7670 / NBRC 15755 / NCIMB 13165 / 161).